Consider the following 293-residue polypeptide: 4-diphosphocytidyl-2-C-methyl-D-erythritol kinase (293 aa).

Residue K16 is part of the active site. 99 to 109 contacts ATP; the sequence is PMGAGLGGGSS. D141 is an active-site residue.

It belongs to the GHMP kinase family. IspE subfamily.

The catalysed reaction is 4-CDP-2-C-methyl-D-erythritol + ATP = 4-CDP-2-C-methyl-D-erythritol 2-phosphate + ADP + H(+). It participates in isoprenoid biosynthesis; isopentenyl diphosphate biosynthesis via DXP pathway; isopentenyl diphosphate from 1-deoxy-D-xylulose 5-phosphate: step 3/6. Catalyzes the phosphorylation of the position 2 hydroxy group of 4-diphosphocytidyl-2C-methyl-D-erythritol. The polypeptide is 4-diphosphocytidyl-2-C-methyl-D-erythritol kinase (Paraburkholderia phytofirmans (strain DSM 17436 / LMG 22146 / PsJN) (Burkholderia phytofirmans)).